The chain runs to 379 residues: Cystathionine gamma-lyase (379 aa).

Lys195 bears the N6-(pyridoxal phosphate)lysine mark.

It belongs to the trans-sulfuration enzymes family. It depends on pyridoxal 5'-phosphate as a cofactor.

The enzyme catalyses L,L-cystathionine + H2O = 2-oxobutanoate + L-cysteine + NH4(+). It catalyses the reaction L-homocysteine + H2O = 2-oxobutanoate + hydrogen sulfide + NH4(+) + H(+). In terms of biological role, catalyzes the conversion of cystathionine to cysteine, and homocysteine to sulfide. The sequence is that of Cystathionine gamma-lyase (mccB) from Bacillus subtilis (strain 168).